A 431-amino-acid polypeptide reads, in one-letter code: Serine hydroxymethyltransferase (431 aa).

(6S)-5,6,7,8-tetrahydrofolate is bound by residues leucine 121 and 125–127 (GHL). Lysine 230 is modified (N6-(pyridoxal phosphate)lysine). Position 369–371 (369–371 (SPF)) interacts with (6S)-5,6,7,8-tetrahydrofolate.

The protein belongs to the SHMT family. In terms of assembly, homodimer. Pyridoxal 5'-phosphate serves as cofactor.

It is found in the cytoplasm. The catalysed reaction is (6R)-5,10-methylene-5,6,7,8-tetrahydrofolate + glycine + H2O = (6S)-5,6,7,8-tetrahydrofolate + L-serine. The protein operates within one-carbon metabolism; tetrahydrofolate interconversion. It functions in the pathway amino-acid biosynthesis; glycine biosynthesis; glycine from L-serine: step 1/1. Functionally, catalyzes the reversible interconversion of serine and glycine with tetrahydrofolate (THF) serving as the one-carbon carrier. This reaction serves as the major source of one-carbon groups required for the biosynthesis of purines, thymidylate, methionine, and other important biomolecules. Also exhibits THF-independent aldolase activity toward beta-hydroxyamino acids, producing glycine and aldehydes, via a retro-aldol mechanism. This Cytophaga hutchinsonii (strain ATCC 33406 / DSM 1761 / CIP 103989 / NBRC 15051 / NCIMB 9469 / D465) protein is Serine hydroxymethyltransferase.